We begin with the raw amino-acid sequence, 1267 residues long: RNA-directed RNA polymerase lambda-3 (1267 aa).

In terms of domain architecture, RdRp catalytic spans 555–792; it reads LSPTSGSAVI…KLYFIFGCRI (238 aa).

It belongs to the reoviridae RNA-directed RNA polymerase family.

It localises to the virion. The catalysed reaction is RNA(n) + a ribonucleoside 5'-triphosphate = RNA(n+1) + diphosphate. Functionally, RNA-directed RNA polymerase that is involved in transcription and genome replication. Following infection, it catalyzes the synthesis of fully conservative plus strands. After core assembly, which consists in recruitment of one capped plus-strand for each genomic segments and polymerase complexes, the polymerase switches mode and catalyzes the synthesis of complementary minus-strands. The polypeptide is RNA-directed RNA polymerase lambda-3 (L1) (Reovirus type 3 (strain Dearing) (T3D)).